The sequence spans 234 residues: Glucosamine-6-phosphate deaminase (234 aa).

Aspartate 63 acts as the Proton acceptor; for enolization step in catalysis. The active-site For ring-opening step is asparagine 129. Histidine 131 functions as the Proton acceptor; for ring-opening step in the catalytic mechanism. Glutamate 136 functions as the For ring-opening step in the catalytic mechanism.

It belongs to the glucosamine/galactosamine-6-phosphate isomerase family. NagB subfamily.

The enzyme catalyses alpha-D-glucosamine 6-phosphate + H2O = beta-D-fructose 6-phosphate + NH4(+). It participates in amino-sugar metabolism; N-acetylneuraminate degradation; D-fructose 6-phosphate from N-acetylneuraminate: step 5/5. In terms of biological role, catalyzes the reversible isomerization-deamination of glucosamine 6-phosphate (GlcN6P) to form fructose 6-phosphate (Fru6P) and ammonium ion. In Listeria welshimeri serovar 6b (strain ATCC 35897 / DSM 20650 / CCUG 15529 / CIP 8149 / NCTC 11857 / SLCC 5334 / V8), this protein is Glucosamine-6-phosphate deaminase.